We begin with the raw amino-acid sequence, 73 residues long: UPF0346 protein BLi02292/BL01432 (73 aa).

It belongs to the UPF0346 family.

This Bacillus licheniformis (strain ATCC 14580 / DSM 13 / JCM 2505 / CCUG 7422 / NBRC 12200 / NCIMB 9375 / NCTC 10341 / NRRL NRS-1264 / Gibson 46) protein is UPF0346 protein BLi02292/BL01432.